The sequence spans 37 residues: Large ribosomal subunit protein bL36 (37 aa).

Belongs to the bacterial ribosomal protein bL36 family.

In Leptothrix cholodnii (strain ATCC 51168 / LMG 8142 / SP-6) (Leptothrix discophora (strain SP-6)), this protein is Large ribosomal subunit protein bL36.